The primary structure comprises 259 residues: Thiazole synthase (259 aa).

Catalysis depends on Lys95, which acts as the Schiff-base intermediate with DXP. Residues Gly156, 182 to 183, and 204 to 205 each bind 1-deoxy-D-xylulose 5-phosphate; these read AG and NT.

This sequence belongs to the ThiG family. Homotetramer. Forms heterodimers with either ThiH or ThiS.

The protein localises to the cytoplasm. It catalyses the reaction [ThiS sulfur-carrier protein]-C-terminal-Gly-aminoethanethioate + 2-iminoacetate + 1-deoxy-D-xylulose 5-phosphate = [ThiS sulfur-carrier protein]-C-terminal Gly-Gly + 2-[(2R,5Z)-2-carboxy-4-methylthiazol-5(2H)-ylidene]ethyl phosphate + 2 H2O + H(+). It functions in the pathway cofactor biosynthesis; thiamine diphosphate biosynthesis. Functionally, catalyzes the rearrangement of 1-deoxy-D-xylulose 5-phosphate (DXP) to produce the thiazole phosphate moiety of thiamine. Sulfur is provided by the thiocarboxylate moiety of the carrier protein ThiS. In vitro, sulfur can be provided by H(2)S. In Baumannia cicadellinicola subsp. Homalodisca coagulata, this protein is Thiazole synthase.